The following is a 354-amino-acid chain: Opsin-5 (354 aa).

Topologically, residues 1 to 33 are extracellular; the sequence is MALNHTALPQDERLPHYLRDGDPFASKLSWEAD. Residue Asn4 is glycosylated (N-linked (GlcNAc...) asparagine). A helical membrane pass occupies residues 34-54; sequence LVAGFYLTIIGILSTFGNGYV. Topologically, residues 55 to 74 are cytoplasmic; sequence LYMSSRRKKKLRPAEIMTIN. A helical membrane pass occupies residues 75–95; the sequence is LAVCDLGISVVGKPFTIISCF. At 96 to 108 the chain is on the extracellular side; that stretch reads CHRWVFGWIGCRW. Cysteines 106 and 183 form a disulfide. Residues 109–129 form a helical membrane-spanning segment; sequence YGWAGFFFGCGSLITMTAVSL. Over 130–150 the chain is Cytoplasmic; it reads DRYLKICYLSYGVWLKRKHAY. The helical transmembrane segment at 151-171 threads the bilayer; that stretch reads ICLAAIWAYASFWTTMPLVGL. Topologically, residues 172 to 197 are extracellular; sequence GDYVPEPFGTSCTLDWWLAQASVGGQ. A helical membrane pass occupies residues 198-218; that stretch reads VFILNILFFCLLLPTAVIVFS. Topologically, residues 219 to 252 are cytoplasmic; that stretch reads YVKIIAKVKSSSKEVAHFDSRIHSSHVLEMKLTK. A helical membrane pass occupies residues 253–273; that stretch reads VAMLICAGFLIAWIPYAVVSV. The Extracellular portion of the chain corresponds to 274-288; sequence WSAFGRPDSIPIQLS. Residues 289-309 form a helical membrane-spanning segment; the sequence is VVPTLLAKSAAMYNPIIYQVI. Residue Lys296 is modified to N6-(retinylidene)lysine. The Cytoplasmic portion of the chain corresponds to 310-353; the sequence is DYKFACCQTGGLKATKKKSLEGFRLHTVTTVRKSSAVLEIHEEW. S-palmitoyl cysteine attachment occurs at residues Cys315 and Cys316.

Belongs to the G-protein coupled receptor 1 family. Opsin subfamily. It is uncertain whether Cys-315 or Cys-316 is palmitoylated. As to expression, detected in brain and retina and cell lines derived from neural retina.

It localises to the cell membrane. G-protein coupled receptor which selectively activates G(i) type G proteins via ultraviolet A (UVA) light-mediated activation in the retina. Preferentially binds the chromophore 11-cis retinal and is a bistable protein that displays emission peaks at 380 nm (UVA light) and 470 nm (blue light). Required for the light-response in the inner plexiform layer, and contributes to the regulation of the light-response in the nerve fiber layer, via phosphorylated DAT/SLC6A3 dopamine uptake. Involved in local corneal and retinal circadian rhythm photoentrainment via modulation of the UVA light-induced phase-shift of the retina clock. Acts as a circadian photoreceptor in the outer ear, via modulation of circadian clock-gene expression in response to violet light during the light-to-dark transition phase and night phase of the circadian cycle. Required in the retina to negatively regulate hyaloid vessel regression during postnatal development via light-dependent OPN5-SLC32A1-DRD2-VEGFR2 signaling. Involved in the light-dependent regulation of retina and vitreous compartment dopamine levels. This chain is Opsin-5 (OPN5), found in Homo sapiens (Human).